A 1978-amino-acid polypeptide reads, in one-letter code: Centrosomal protein Cep290 (1978 aa).

Residues methionine 1–glutamate 650 are necessary and sufficient for function in ciliogenesis, transition zone (TZ) assembly, and recruitment of DZP1 and Mks1 to the TZ. Also required for subcellular localization to the cilium basal body. Coiled coils occupy residues aspartate 76–glutamine 384 and isoleucine 471–aspartate 505. The interval glutamine 271–alanine 296 is disordered. The segment covering serine 276–glutamine 290 has biased composition (low complexity). The segment at alanine 663–proline 688 is disordered. Coiled-coil stretches lie at residues phenylalanine 853 to glutamine 887, leucine 922 to aspartate 970, and alanine 1192 to glutamate 1233. A compositionally biased stretch (basic and acidic residues) spans lysine 1313–valine 1324. Positions lysine 1313–glutamate 1397 are disordered. Positions serine 1329–serine 1341 are enriched in low complexity. A compositionally biased stretch (acidic residues) spans valine 1379–aspartate 1391. 2 coiled-coil regions span residues isoleucine 1405–arginine 1439 and leucine 1501–lysine 1654. Disordered stretches follow at residues valine 1684–histidine 1714 and leucine 1859–glutamine 1884. Over residues proline 1693 to serine 1708 the composition is skewed to polar residues. A coiled-coil region spans residues isoleucine 1726–leucine 1935.

In terms of assembly, interacts (via N-terminus) with DZIP1. As to expression, expressed in sensory neurons type I and in germ cells (at protein level).

It localises to the cytoplasm. It is found in the cytoskeleton. The protein localises to the cilium basal body. The protein resides in the microtubule organizing center. Its subcellular location is the centrosome. It localises to the centriole. In terms of biological role, essential for ciliogenesis in sensory neurons and spermatocytes. During neuron and spermatocyte ciliogenesis, essential for initiating transition zone (TZ) assembly and is required for the formation of diverse connections between microtubules and between microtubules and the membrane. Regulates TZ assembly by recruiting DZIP1 to the plasma membrane where it promotes early ciliary membrane formation resulting in the initiation of TZ assembly. The chain is Centrosomal protein Cep290 from Drosophila melanogaster (Fruit fly).